The chain runs to 476 residues: DnaJ protein P58IPK homolog A (476 aa).

An N-terminal signal peptide occupies residues 1 to 28 (MVAMARWPWRVLLPLLLLHSSPVFFVFA). TPR repeat units follow at residues 36 to 69 (PSTL…EPNH), 70 to 103 (SEAY…KPGS), 116 to 150 (AQNA…SPDC), 152 to 184 (KAKL…DEDN), 185 to 218 (LDAL…DPEH), 231 to 264 (LVKK…DPDH), 269 to 302 (VHLY…DGEL), and 304 to 336 (DALT…SPQD). In terms of domain architecture, J spans 357–423 (DWYKILGISK…DKRVRYDRGE (67 aa)).

In terms of assembly, interacts with BIP1.

It localises to the endoplasmic reticulum lumen. In terms of biological role, may play a role in protein folding in the endoplasmic reticulum. The chain is DnaJ protein P58IPK homolog A from Oryza sativa subsp. japonica (Rice).